The sequence spans 318 residues: uncharacterized protein (318 aa).

It to A.aeolicus AA07 and AA11.

This is an uncharacterized protein from Aquifex aeolicus (strain VF5).